Consider the following 293-residue polypeptide: HTH-type transcriptional regulator HdfR (293 aa).

The HTH lysR-type domain occupies 1–58; that stretch reads MDTELLKTFLEVSRTRHFGRAAESLYLTQSAVSFRIRQLENQLGANLFTRHRNNIRLT. Positions 18-37 form a DNA-binding region, H-T-H motif; it reads FGRAAESLYLTQSAVSFRIR.

It belongs to the LysR transcriptional regulatory family.

Negatively regulates the transcription of the flagellar master operon flhDC by binding to the upstream region of the operon. This Yersinia pseudotuberculosis serotype O:1b (strain IP 31758) protein is HTH-type transcriptional regulator HdfR.